Reading from the N-terminus, the 4462-residue chain is Dynein axonemal heavy chain 17 (4462 aa).

The tract at residues 1 to 1808 is stem; that stretch reads MTMAPDVRLE…FANICDAQIQ (1808 aa). TPR repeat units follow at residues 1019 to 1052 and 1702 to 1736; these read TWTD…VSKC and IWWT…QLNV. AAA regions lie at residues 1809 to 2030, 2090 to 2311, 2417 to 2665, and 2763 to 3012; these read YSYE…VLVV, KIIK…FGFK, ELDP…IFQG, and SYNE…ERRY. Residues 1847-1854, 2128-2135, 2455-2462, and 2801-2808 each bind ATP; these read GPAGTGKT, GNAGSGKS, GNAGTGKS, and GVGGSGKQ. Coiled-coil stretches lie at residues 3027–3086 and 3257–3309; these read YQNL…LIQV and DVAP…EKIK. A stalk region spans residues 3027-3313; it reads YQNLLAKKRT…TAEKIKCQQE (287 aa). AAA stretches follow at residues 3405 to 3632 and 3842 to 4068; these read LTDD…EIEE and IKNF…VLYN. A TPR 3 repeat occupies 4147 to 4182; the sequence is PESPYLYGLHPNAEIGFLTVTSEKLFRTVLEMQPKE.

It belongs to the dynein heavy chain family. In terms of assembly, consists of at least two heavy chains and a number of intermediate and light chains. As to expression, expressed in testis. Expressed in spermatozoa (at protein level). Not detected in airway epithelial cells (at protein level).

The protein resides in the cytoplasm. It is found in the cytoskeleton. The protein localises to the flagellum axoneme. Force generating protein component of the outer dynein arms (ODAs) in the sperm flagellum. Produces force towards the minus ends of microtubules. Dynein has ATPase activity; the force-producing power stroke is thought to occur on release of ADP. Plays a major role in sperm motility, implicated in sperm flagellar assembly and beating. The protein is Dynein axonemal heavy chain 17 of Homo sapiens (Human).